A 226-amino-acid polypeptide reads, in one-letter code: ATP synthase F(0) complex subunit a (226 aa).

Helical transmembrane passes span 5-25, 68-88, 97-117, 138-158, 160-180, and 189-209; these read LFAS…LIIL, WSLM…LGLL, QLSM…TTGF, IPML…ALAV, LTAN…ATLA, and TLII…VALI.

The protein belongs to the ATPase A chain family. Component of the ATP synthase complex composed at least of ATP5F1A/subunit alpha, ATP5F1B/subunit beta, ATP5MC1/subunit c (homooctomer), MT-ATP6/subunit a, MT-ATP8/subunit 8, ATP5ME/subunit e, ATP5MF/subunit f, ATP5MG/subunit g, ATP5MK/subunit k, ATP5MJ/subunit j, ATP5F1C/subunit gamma, ATP5F1D/subunit delta, ATP5F1E/subunit epsilon, ATP5PF/subunit F6, ATP5PB/subunit b, ATP5PD/subunit d, ATP5PO/subunit OSCP. ATP synthase complex consists of a soluble F(1) head domain (subunits alpha(3) and beta(3)) - the catalytic core - and a membrane F(0) domain - the membrane proton channel (subunits c, a, 8, e, f, g, k and j). These two domains are linked by a central stalk (subunits gamma, delta, and epsilon) rotating inside the F1 region and a stationary peripheral stalk (subunits F6, b, d, and OSCP). Interacts with DNAJC30; interaction is direct.

It localises to the mitochondrion inner membrane. The catalysed reaction is H(+)(in) = H(+)(out). Its function is as follows. Subunit a, of the mitochondrial membrane ATP synthase complex (F(1)F(0) ATP synthase or Complex V) that produces ATP from ADP in the presence of a proton gradient across the membrane which is generated by electron transport complexes of the respiratory chain. ATP synthase complex consist of a soluble F(1) head domain - the catalytic core - and a membrane F(1) domain - the membrane proton channel. These two domains are linked by a central stalk rotating inside the F(1) region and a stationary peripheral stalk. During catalysis, ATP synthesis in the catalytic domain of F(1) is coupled via a rotary mechanism of the central stalk subunits to proton translocation. With the subunit c (ATP5MC1), forms the proton-conducting channel in the F(0) domain, that contains two crucial half-channels (inlet and outlet) that facilitate proton movement from the mitochondrial intermembrane space (IMS) into the matrix. Protons are taken up via the inlet half-channel and released through the outlet half-channel, following a Grotthuss mechanism. This Gorilla gorilla gorilla (Western lowland gorilla) protein is ATP synthase F(0) complex subunit a.